Consider the following 159-residue polypeptide: MMADREVVLTAQGLKKLEDELELLKTVRRKEIAERIKQAIAFGDISENSEYDEAKNEQAQVEDRINKLETMLRKAVIIDEEDINTDIVSIGSIVQVNDLEFDEIVEYTIVGSTEADPYELKISNESPVGRALLGTKVGDVVEVQIPDGVTKYEILKITR.

Residues 5-77 (REVVLTAQGL…LETMLRKAVI (73 aa)) are a coiled coil.

The protein belongs to the GreA/GreB family.

Functionally, necessary for efficient RNA polymerase transcription elongation past template-encoded arresting sites. The arresting sites in DNA have the property of trapping a certain fraction of elongating RNA polymerases that pass through, resulting in locked ternary complexes. Cleavage of the nascent transcript by cleavage factors such as GreA or GreB allows the resumption of elongation from the new 3'terminus. GreA releases sequences of 2 to 3 nucleotides. The chain is Transcription elongation factor GreA from Alkaliphilus oremlandii (strain OhILAs) (Clostridium oremlandii (strain OhILAs)).